We begin with the raw amino-acid sequence, 452 residues long: Keratin, type I cytoskeletal 42 (452 aa).

Positions 4–93 are head; sequence TTSVRQFSTS…GVSDALLGGS (90 aa). The coil 1A stretch occupies residues 94–129; the sequence is EKETMQNLNDRLATYLDRVRALEEANADLEVKIREW. Residues 94–405 form the IF rod domain; it reads EKETMQNLND…RLLEGEDAHL (312 aa). A linker 1 region spans residues 130–147; that stretch reads YKKQGPGPARDYSPYFKT. A coil 1B region spans residues 148 to 239; it reads IEDLRNKILA…KNHEEEMNAL (92 aa). The segment at 240–262 is linker 12; sequence RGQVGGDVNVEMDAAPGVDLSRI. The interval 263–401 is coil 2; the sequence is LNEMRDQYEK…ATYRRLLEGE (139 aa). Positions 402 to 452 are tail; that stretch reads DAHLATQYSSSLASQPSREGMVTSRQVRTIVEEVQDGKVVSSREQVHRSTH.

Belongs to the intermediate filament family. Heterodimer of a type I and a type II keratin. Colocalizes with KRT8/KRT18 filament network. Expressed in nail matrix and nail bed epithelium (at protein level). Also expressed in tongue and digits with weak expression in vibrissae and in both filiform and fungiform papillae of oral mucosa.

The protein resides in the cytoplasm. The protein is Keratin, type I cytoskeletal 42 of Mus musculus (Mouse).